We begin with the raw amino-acid sequence, 1055 residues long: Error-prone DNA polymerase (1055 aa).

This sequence belongs to the DNA polymerase type-C family. DnaE2 subfamily.

The protein resides in the cytoplasm. The enzyme catalyses DNA(n) + a 2'-deoxyribonucleoside 5'-triphosphate = DNA(n+1) + diphosphate. In terms of biological role, DNA polymerase involved in damage-induced mutagenesis and translesion synthesis (TLS). It is not the major replicative DNA polymerase. This Corynebacterium glutamicum (strain ATCC 13032 / DSM 20300 / JCM 1318 / BCRC 11384 / CCUG 27702 / LMG 3730 / NBRC 12168 / NCIMB 10025 / NRRL B-2784 / 534) protein is Error-prone DNA polymerase.